A 476-amino-acid chain; its full sequence is Trigger factor (476 aa).

The PPIase FKBP-type domain occupies 174–261 (GDIAVVSFKG…LKDLKEKELP (88 aa)). The interval 436-476 (KENTTKTSKTTKNSKTTKATKTTKTTKTTKTSKTQNKKEKK) is disordered. Low complexity predominate over residues 440–469 (TKTSKTTKNSKTTKATKTTKTTKTTKTSKT).

Belongs to the FKBP-type PPIase family. Tig subfamily.

It localises to the cytoplasm. The catalysed reaction is [protein]-peptidylproline (omega=180) = [protein]-peptidylproline (omega=0). In terms of biological role, involved in protein export. Acts as a chaperone by maintaining the newly synthesized protein in an open conformation. Functions as a peptidyl-prolyl cis-trans isomerase. This is Trigger factor from Prochlorococcus marinus (strain MIT 9215).